We begin with the raw amino-acid sequence, 365 residues long: Class E basic helix-loop-helix protein 22 (365 aa).

3 disordered regions span residues 34 to 93, 134 to 156, and 188 to 225; these read AFRS…GGGG, GRGS…DGRC, and HLHG…KEQK. Positions 82 to 93 are enriched in gly residues; that stretch reads GGGGAGGGGGGG. Residues 191–216 are compositionally biased toward gly residues; that stretch reads GGAGLPPGGSTGSGGGGSGGGGGGGS. Positions 226–280 constitute a bHLH domain; it reads ALRLNINARERRRMHDLNDALDELRAVIPYAHSPSVRKLSKIATLLLAKNYILMQ.

Heterodimer with other bHLH proteins, like TCF3/E47. As to expression, kidney, lung, brain and pancreas (insulinoma).

Its subcellular location is the nucleus. Functionally, inhibits DNA binding of TCF3/E47 homodimers and TCF3 (E47)/NEUROD1 heterodimers and acts as a strong repressor of Neurod1 and Myod-responsive genes, probably by heterodimerization with class a basic helix-loop-helix factors. Despite the presence of an intact basic domain, does not bind to DNA. The polypeptide is Class E basic helix-loop-helix protein 22 (BHLHE22) (Mesocricetus auratus (Golden hamster)).